We begin with the raw amino-acid sequence, 535 residues long: Doublesex- and mab-3-related transcription factor A2 (535 aa).

A DNA-binding region (DM) is located at residues 69 to 116 (CARCRNHGVVSALKGHKRYCRWKDCLCAKCTLIAERQRVMAAQVALRR). Positions 200–315 (LQAGRPGSPQ…GGPGPRQRTP (116 aa)) are disordered. Residues 313-348 (RTPLDILTRVFPGHRRGVLELVLQGCGGDVVQAIEQ) enclose the DMA domain.

This sequence belongs to the DMRT family.

Its subcellular location is the nucleus. Functionally, may be involved in sexual development. The polypeptide is Doublesex- and mab-3-related transcription factor A2 (DMRTA2) (Bos taurus (Bovine)).